Reading from the N-terminus, the 194-residue chain is Thymidylate kinase (194 aa).

7–14 (GVDCVGKS) contributes to the ATP binding site.

This sequence belongs to the thymidylate kinase family.

It carries out the reaction dTMP + ATP = dTDP + ADP. Phosphorylation of dTMP to form dTDP in both de novo and salvage pathways of dTTP synthesis. This is Thymidylate kinase from Campylobacter lari (strain RM2100 / D67 / ATCC BAA-1060).